The following is a 357-amino-acid chain: MSLTRLLIKDFRNIENADLALSPGFNFLVGANGSGKTSVLEAIYTLGHGRAFRSLQPGRVIRHEQEAFVLHGRLQGEERETSIGLTKDKQGDSKVRIDGTDGHKIAELAHLMPMQLITPEGFTLLNGGPKYRRAFLDWGCFHNEAGFFTAWSNLKRLLKQRNAALRQVSRYEQLRPWDKELIPLAEQISTWRAEYSIAIAQDMADTCQQFLPEFSLTFSFQRGWEKETDYADVLERSFERDRMLTYTAHGPHKADFRIRADGAPVEDTLSRGQLKLLMCALRLAQGEFLTRESGRRCLYLIDDFASELDDARRGLLASRLKATQSQVFVSVISAEHVIDMSDENSKMFTVEKGKITD.

30–37 is a binding site for ATP; the sequence is GANGSGKT.

This sequence belongs to the RecF family.

The protein localises to the cytoplasm. Functionally, the RecF protein is involved in DNA metabolism; it is required for DNA replication and normal SOS inducibility. RecF binds preferentially to single-stranded, linear DNA. It also seems to bind ATP. The sequence is that of DNA replication and repair protein RecF from Salmonella schwarzengrund (strain CVM19633).